The primary structure comprises 467 residues: Asparagine--tRNA ligase (467 aa).

The protein belongs to the class-II aminoacyl-tRNA synthetase family. Homodimer.

It is found in the cytoplasm. The catalysed reaction is tRNA(Asn) + L-asparagine + ATP = L-asparaginyl-tRNA(Asn) + AMP + diphosphate + H(+). In Actinobacillus succinogenes (strain ATCC 55618 / DSM 22257 / CCUG 43843 / 130Z), this protein is Asparagine--tRNA ligase.